The following is a 20-amino-acid chain: Haemoporin (20 aa).

The disordered stretch occupies residues 1-20 (AAVPEAAAEATAEAAPVSEF).

As to quaternary structure, homopentamer. Forms a cylindrical structure with a central pore. In terms of tissue distribution, detected in the hemolymph.

The protein resides in the secreted. The polypeptide is Haemoporin (Aplysia californica (California sea hare)).